The chain runs to 358 residues: Golgi-resident adenosine 3',5'-bisphosphate 3'-phosphatase (358 aa).

An N-acetylmethionine modification is found at M1. The Cytoplasmic segment spans residues M1–G12. A helical transmembrane segment spans residues V13–A33. Residues G34–H358 are Lumenal-facing. Positions R85–M106 are disordered. D110 (proton acceptor) is an active-site residue. The Mg(2+) site is built by E133, D174, L176, and D177. The active-site Proton acceptor is the T179. Residues S242 and H245 each coordinate AMP. Residue N259 is glycosylated (N-linked (GlcNAc...) asparagine). 2 residues coordinate AMP: G268 and K272. Residue D300 coordinates Mg(2+).

This sequence belongs to the inositol monophosphatase superfamily. Requires Mg(2+) as cofactor. In terms of processing, contains N-linked glycan resistant to endoglycosydase H.

The protein localises to the golgi apparatus. It localises to the trans-Golgi network membrane. The catalysed reaction is adenosine 3',5'-bisphosphate + H2O = AMP + phosphate. Its pathway is sulfur metabolism. With respect to regulation, strongly inhibited by lithium. Its function is as follows. Exhibits 3'-nucleotidase activity toward adenosine 3',5'-bisphosphate (PAP), namely hydrolyzes adenosine 3',5'-bisphosphate into adenosine 5'-monophosphate (AMP) and a phosphate. May play a role in the formation of skeletal elements derived through endochondral ossification, possibly by clearing adenosine 3',5'-bisphosphate produced by Golgi sulfotransferases during glycosaminoglycan sulfation. Has no activity toward 3'-phosphoadenosine 5'-phosphosulfate (PAPS) or inositol phosphate (IP) substrates including I(1)P, I(1,4)P2, I(1,3,4)P3, I(1,4,5)P3 and I(1,3,4,5)P4. This is Golgi-resident adenosine 3',5'-bisphosphate 3'-phosphatase (BPNT2) from Callithrix jacchus (White-tufted-ear marmoset).